Consider the following 243-residue polypeptide: MLIEHEVAFVLHVRPWRETSLLVEVLTQAYGRLGLIARGVQGLKKQTLRAALQPLQWIRFSAIQRGELGQLRQAEALDTAPRLKGETMLASFYINELLLRLVPRHAPVNELYLAYSQTRERLRTNDSLAWSLRLFERDILETLGVGFNLECDANGTPLDPAAHYVLDPLEGPRRLLSEHNNAERRDTATGHVLLALAHKQIPNTNDLAGLRRSMRAVLLHHLGGRGLKSWEMIAAFRHQDTSP.

This sequence belongs to the RecO family.

Involved in DNA repair and RecF pathway recombination. This Xylella fastidiosa (strain M12) protein is DNA repair protein RecO.